The following is a 173-amino-acid chain: Large ribosomal subunit protein uL5 (173 aa).

It belongs to the universal ribosomal protein uL5 family. Component of the large ribosomal subunit.

It is found in the nucleus. The protein localises to the cytoplasm. Functionally, component of the ribosome, a large ribonucleoprotein complex responsible for the synthesis of proteins in the cell. The small ribosomal subunit (SSU) binds messenger RNAs (mRNAs) and translates the encoded message by selecting cognate aminoacyl-transfer RNA (tRNA) molecules. The large subunit (LSU) contains the ribosomal catalytic site termed the peptidyl transferase center (PTC), which catalyzes the formation of peptide bonds, thereby polymerizing the amino acids delivered by tRNAs into a polypeptide chain. The nascent polypeptides leave the ribosome through a tunnel in the LSU and interact with protein factors that function in enzymatic processing, targeting, and the membrane insertion of nascent chains at the exit of the ribosomal tunnel. The sequence is that of Large ribosomal subunit protein uL5 (RPL11) from Encephalitozoon cuniculi (strain GB-M1) (Microsporidian parasite).